Consider the following 238-residue polypeptide: MGKRIISQNRGRGTPTYRAPSHKYKAELRHPRVDENTSIQGKVINLEHDPARSAPIAKVVFETGEERLLLASEGIAVGSTIECGDDADVRPGNIVPIGKVPEGFFICNIESKPNDGGRFVRSSGVYATVVTHESNRTAVAMPSGNIKWLNPKCRAVVGIVAGGGRVDRPWLKAGKKYHKMKTRAAKYPRVSGVAMNPVDHPFGGGAWKHPGKPTTVSRNAPPGRKVGLIAARRTGMKR.

The disordered stretch occupies residues 203-223 (GGGAWKHPGKPTTVSRNAPPG).

Belongs to the universal ribosomal protein uL2 family. As to quaternary structure, part of the 50S ribosomal subunit. Forms a bridge to the 30S subunit in the 70S ribosome.

Its function is as follows. One of the primary rRNA binding proteins. Required for association of the 30S and 50S subunits to form the 70S ribosome, for tRNA binding and peptide bond formation. It has been suggested to have peptidyltransferase activity; this is somewhat controversial. Makes several contacts with the 16S rRNA in the 70S ribosome. This is Large ribosomal subunit protein uL2 from Methanosarcina barkeri (strain Fusaro / DSM 804).